The sequence spans 241 residues: Large ribosomal subunit protein uL3 (241 aa).

2 disordered regions span residues 139–166 (VSHR…PGHM) and 214–241 (ADAP…QEGA). Residue glutamine 151 is modified to N5-methylglutamine. Positions 229-241 (AAAEAPAAEQEGA) are enriched in low complexity.

Part of the 50S ribosomal subunit. Forms a cluster with proteins L14 and L19. Methylated, on either Lys-155 or Lys-158. Post-translationally, methylated by PrmB.

Functionally, one of the primary rRNA binding proteins, it binds directly near the 3'-end of the 23S rRNA, where it nucleates assembly of the 50S subunit. This is Large ribosomal subunit protein uL3 from Rhodopseudomonas palustris (strain ATCC BAA-98 / CGA009).